The chain runs to 119 residues: uncharacterized protein (119 aa).

Positions 1 to 18 (MPAVFMLASSSALQCGRG) are cleaved as a signal peptide. The disordered stretch occupies residues 23-100 (PRTEVGAGHS…MFPGPLRGPA (78 aa)). The span at 43 to 71 (GNQTSVIPATSRQAALGTSWTQRRTQPLQ) shows a compositional bias: polar residues. N-linked (GlcNAc...) asparagine glycosylation is present at Asn44.

It is found in the secreted. This is an uncharacterized protein from Homo sapiens (Human).